Consider the following 573-residue polypeptide: BICD family-like cargo adapter 1 (573 aa).

The interval Glu67 to Pro97 is disordered. Residues Arg68–Gln77 show a composition bias toward basic and acidic residues. A CC1 box motif is present at residues Ala113–Gly117. Positions Lys118–Arg376 form a coiled coil. The disordered stretch occupies residues Asp386–Ala412. Residues Ser387 to Ser396 are compositionally biased toward low complexity. Residues Leu440–Arg525 are a coiled coil.

It belongs to the BICDR family. In terms of assembly, part of a tripartite complex with dynein and dynactin, acts an adapter linking the dynein motor complex and dynactin. Interacts with KIF1C. Interacts with RAB6A and RAB6B; interaction is specific to Rab6.

It is found in the cytoplasm. The protein resides in the cytoskeleton. It localises to the microtubule organizing center. The protein localises to the centrosome. Acts as an adapter protein linking the dynein motor complex to various cargos and converts dynein from a non-processive to a highly processive motor in the presence of dynactin. Facilitates the interaction between dynein and dynactin and activates dynein processivity (the ability to move along a microtubule for a long distance without falling off the track). Predominantly recruits 2 dyneins, which increases both the force and speed of the microtubule motor. Component of secretory vesicle machinery in developing neurons that acts as a regulator of neurite outgrowth. Regulates the secretory vesicle transport by controlling the accumulation of Rab6-containing secretory vesicles in the pericentrosomal region restricting anterograde secretory transport during the early phase of neuronal differentiation, thereby inhibiting neuritogenesis. The chain is BICD family-like cargo adapter 1 (BICDL1) from Homo sapiens (Human).